Here is a 71-residue protein sequence, read N- to C-terminus: uncharacterized protein (71 aa).

The signal sequence occupies residues 1–23 (MTLLIILILKYLLCLENLKNISL). 4 N-linked (GlcNAc...) asparagine glycosylation sites follow: Asn-20, Asn-28, Asn-44, and Asn-50.

The protein localises to the secreted. This is an uncharacterized protein from Dictyostelium discoideum (Social amoeba).